We begin with the raw amino-acid sequence, 465 residues long: GTPase Der (465 aa).

EngA-type G domains are found at residues 3-166 (FLVA…LNEY) and 184-358 (IHFS…ACAN). Residues 9–16 (GRANVGKS), 56–60 (DTGGI), 118–121 (NKVD), 190–197 (GRPNVGKS), 237–241 (DTAGV), and 302–305 (NKWD) contribute to the GTP site. A KH-like domain is found at 359–443 (KKITTADATR…PIVFEFKQSE (85 aa)). The segment at 446 to 465 (FADRKNKRSKDEGSKSKKVK) is disordered.

It belongs to the TRAFAC class TrmE-Era-EngA-EngB-Septin-like GTPase superfamily. EngA (Der) GTPase family. Associates with the 50S ribosomal subunit.

Its function is as follows. GTPase that plays an essential role in the late steps of ribosome biogenesis. This is GTPase Der from Francisella tularensis subsp. novicida (strain U112).